The primary structure comprises 100 residues: Small ribosomal subunit protein bS20 (100 aa).

The span at 1–18 shows a compositional bias: basic and acidic residues; that stretch reads MPNKKSAEKRVRQSEQRR. The tract at residues 1–26 is disordered; the sequence is MPNKKSAEKRVRQSEQRRQKNRGYQK.

Belongs to the bacterial ribosomal protein bS20 family.

In terms of biological role, binds directly to 16S ribosomal RNA. This chain is Small ribosomal subunit protein bS20, found in Petrotoga mobilis (strain DSM 10674 / SJ95).